A 65-amino-acid polypeptide reads, in one-letter code: Large ribosomal subunit protein bL35 (65 aa).

Belongs to the bacterial ribosomal protein bL35 family.

The sequence is that of Large ribosomal subunit protein bL35 from Acetivibrio thermocellus (strain ATCC 27405 / DSM 1237 / JCM 9322 / NBRC 103400 / NCIMB 10682 / NRRL B-4536 / VPI 7372) (Clostridium thermocellum).